We begin with the raw amino-acid sequence, 533 residues long: Probable nucleolar protein 5-1 (533 aa).

The Nop domain maps to 280 to 398; sequence IAPNLTALVG…LEARLRTLEG (119 aa). A disordered region spans residues 402–533; sequence GRLSGSAKGK…EKKKKKKTEV (132 aa). The segment covering 412–423 has biased composition (basic and acidic residues); it reads PKIEVYDKDKKK. The span at 433-450 shows a compositional bias: polar residues; the sequence is KTYNTAADSLLQTPTVDS. Basic and acidic residues-rich tracts occupy residues 474 to 489 and 515 to 524; these read TEEP…KTEA and MPAKKKEKSE.

It belongs to the NOP5/NOP56 family.

It localises to the nucleus. It is found in the nucleolus. In terms of biological role, required for 60S ribosomal subunit biogenesis. The protein is Probable nucleolar protein 5-1 (NOP5-1) of Arabidopsis thaliana (Mouse-ear cress).